The sequence spans 206 residues: Large ribosomal subunit protein uL4 (206 aa).

Positions 49 to 79 are disordered; that stretch reads KVKTRSEISRTTKKMYKQKGTGNARHGAASA.

This sequence belongs to the universal ribosomal protein uL4 family. As to quaternary structure, part of the 50S ribosomal subunit.

In terms of biological role, one of the primary rRNA binding proteins, this protein initially binds near the 5'-end of the 23S rRNA. It is important during the early stages of 50S assembly. It makes multiple contacts with different domains of the 23S rRNA in the assembled 50S subunit and ribosome. Forms part of the polypeptide exit tunnel. In Methylobacterium sp. (strain 4-46), this protein is Large ribosomal subunit protein uL4.